We begin with the raw amino-acid sequence, 279 residues long: Putative pyruvate, phosphate dikinase regulatory protein (279 aa).

153 to 160 is an ADP binding site; the sequence is GISRTSKT.

This sequence belongs to the pyruvate, phosphate/water dikinase regulatory protein family. PDRP subfamily.

It carries out the reaction N(tele)-phospho-L-histidyl/L-threonyl-[pyruvate, phosphate dikinase] + ADP = N(tele)-phospho-L-histidyl/O-phospho-L-threonyl-[pyruvate, phosphate dikinase] + AMP + H(+). The catalysed reaction is N(tele)-phospho-L-histidyl/O-phospho-L-threonyl-[pyruvate, phosphate dikinase] + phosphate + H(+) = N(tele)-phospho-L-histidyl/L-threonyl-[pyruvate, phosphate dikinase] + diphosphate. Bifunctional serine/threonine kinase and phosphorylase involved in the regulation of the pyruvate, phosphate dikinase (PPDK) by catalyzing its phosphorylation/dephosphorylation. The protein is Putative pyruvate, phosphate dikinase regulatory protein of Brucella abortus (strain 2308).